Consider the following 167-residue polypeptide: NADH-quinone oxidoreductase subunit B 2 (167 aa).

Positions 39, 40, 104, and 134 each coordinate [4Fe-4S] cluster.

It belongs to the complex I 20 kDa subunit family. In terms of assembly, NDH-1 is composed of 14 different subunits. Subunits NuoB, C, D, E, F, and G constitute the peripheral sector of the complex. Requires [4Fe-4S] cluster as cofactor.

It is found in the cell inner membrane. The catalysed reaction is a quinone + NADH + 5 H(+)(in) = a quinol + NAD(+) + 4 H(+)(out). In terms of biological role, NDH-1 shuttles electrons from NADH, via FMN and iron-sulfur (Fe-S) centers, to quinones in the respiratory chain. Couples the redox reaction to proton translocation (for every two electrons transferred, four hydrogen ions are translocated across the cytoplasmic membrane), and thus conserves the redox energy in a proton gradient. The protein is NADH-quinone oxidoreductase subunit B 2 of Burkholderia mallei (strain NCTC 10247).